A 555-amino-acid polypeptide reads, in one-letter code: Glutamine--tRNA ligase (555 aa).

Positions Pro34–His44 match the 'HIGH' region motif. ATP contacts are provided by residues Glu35–Asn37 and His41–Ser47. L-glutamine is bound by residues Asp67 and Tyr212. Residues Thr231, Arg261–Leu262, and Met269–Lys271 each bind ATP. The short motif at Ile268 to Arg272 is the 'KMSKS' region element.

It belongs to the class-I aminoacyl-tRNA synthetase family. Monomer.

Its subcellular location is the cytoplasm. The catalysed reaction is tRNA(Gln) + L-glutamine + ATP = L-glutaminyl-tRNA(Gln) + AMP + diphosphate. In Yersinia pseudotuberculosis serotype O:3 (strain YPIII), this protein is Glutamine--tRNA ligase.